Consider the following 324-residue polypeptide: Proto-oncogene Mas (324 aa).

Residues 1-35 are Extracellular-facing; that stretch reads MDQSNMTSFAEEKAMNTSSRNASLGTSHPPIPIVH. N5, N16, and N21 each carry an N-linked (GlcNAc...) asparagine glycan. A helical transmembrane segment spans residues 36-60; it reads WVIMSISPLGFVENGILLWFLCFRM. Residues 61-64 lie on the Cytoplasmic side of the membrane; that stretch reads RRNP. A helical membrane pass occupies residues 65–86; it reads FTVYITHLSIADISLLFCIFIL. Topologically, residues 87-103 are extracellular; it reads SIDYALDYELSSGHYYT. The chain crosses the membrane as a helical span at residues 104–127; that stretch reads IVTLSVTFLFGYNTGLYLLTAISV. The Cytoplasmic portion of the chain corresponds to 128–148; the sequence is ERCLSVLYPIWYRCHRPKHQS. The chain crosses the membrane as a helical span at residues 149–171; that stretch reads AFVCALLWALSCLVTTMEYVMCI. The Extracellular portion of the chain corresponds to 172-184; the sequence is DSGEESHSQSDCR. Residues 185-205 form a helical membrane-spanning segment; that stretch reads AVIIFIAILSFLVFTPLMLVS. At 206–223 the chain is on the cytoplasmic side; it reads STILVVKIRKNTWASHSS. The chain crosses the membrane as a helical span at residues 224-244; the sequence is KLYIVIMVTIIIFLIFAMPMR. Over 245 to 262 the chain is Extracellular; the sequence is VLYLLYYEYWSTFGNLHN. Residues 263–283 form a helical membrane-spanning segment; it reads ISLLFSTINSSANPFIYFFVG. Over 284 to 324 the chain is Cytoplasmic; it reads SSKKKRFRESLKVVLTRAFKDEMQPRRQEGNGNTVSIETVV.

The protein belongs to the G-protein coupled receptor 1 family. As to quaternary structure, interacts with AGTR1. Interacts with FLNA (via filamin repeat 21); increases PKA-mediated phosphorylation of FLNA. Expressed in platelets.

The protein localises to the cell membrane. In terms of biological role, receptor for angiotensin 1-7. Acts specifically as a functional antagonist of AGTR1 (angiotensin-2 type 1 receptor), although it up-regulates AGTR1 receptor levels. Positive regulation of AGTR1 levels occurs through activation of the G-proteins GNA11 and GNAQ, and stimulation of the protein kinase C signaling cascade. The antagonist effect on AGTR1 function is probably due to AGTR1 being physically altered by MAS1. The chain is Proto-oncogene Mas (Mas1) from Rattus norvegicus (Rat).